We begin with the raw amino-acid sequence, 308 residues long: Acetylglutamate kinase (308 aa).

Substrate is bound by residues 73–74, R95, and N194; that span reads GG.

It belongs to the acetylglutamate kinase family. ArgB subfamily.

The protein localises to the cytoplasm. The catalysed reaction is N-acetyl-L-glutamate + ATP = N-acetyl-L-glutamyl 5-phosphate + ADP. It participates in amino-acid biosynthesis; L-arginine biosynthesis; N(2)-acetyl-L-ornithine from L-glutamate: step 2/4. Its function is as follows. Catalyzes the ATP-dependent phosphorylation of N-acetyl-L-glutamate. The chain is Acetylglutamate kinase from Rhodococcus jostii (strain RHA1).